Consider the following 123-residue polypeptide: Large ribosomal subunit protein uL18 (123 aa).

The protein belongs to the universal ribosomal protein uL18 family. Part of the 50S ribosomal subunit; part of the 5S rRNA/L5/L18/L25 subcomplex. Contacts the 5S and 23S rRNAs.

This is one of the proteins that bind and probably mediate the attachment of the 5S RNA into the large ribosomal subunit, where it forms part of the central protuberance. This Symbiobacterium thermophilum (strain DSM 24528 / JCM 14929 / IAM 14863 / T) protein is Large ribosomal subunit protein uL18.